Reading from the N-terminus, the 66-residue chain is Large ribosomal subunit protein bL35 (66 aa).

A compositionally biased stretch (basic residues) spans 24-43; that stretch reads HKKAGKRHNLSKKSKARKRR. The segment at 24–44 is disordered; that stretch reads HKKAGKRHNLSKKSKARKRRL.

It belongs to the bacterial ribosomal protein bL35 family.

The chain is Large ribosomal subunit protein bL35 from Dictyoglomus thermophilum (strain ATCC 35947 / DSM 3960 / H-6-12).